Consider the following 1583-residue polypeptide: Mediator of RNA polymerase II transcription subunit 12 (1583 aa).

Disordered stretches follow at residues 1-117 (MIPH…SLSW) and 1481-1525 (SNIP…SGIP). Residues 66-79 (DTSEREPPSKRLRL) show a composition bias toward basic and acidic residues. 2 stretches are compositionally biased toward low complexity: residues 102–114 (TPST…KPSS) and 1490–1514 (PSPA…GSST).

This sequence belongs to the Mediator complex subunit 12 family. Component of the srb8-11 complex, which itself associates with the Mediator complex.

It is found in the nucleus. Its function is as follows. Component of the srb8-11 complex. The srb8-11 complex is a regulatory module of the Mediator complex which is itself involved in regulation of basal and activated RNA polymerase II-dependent transcription. The srb8-11 complex may be involved in the transcriptional repression of a subset of genes regulated by Mediator. It may inhibit the association of the Mediator complex with RNA polymerase II to form the holoenzyme complex. The polypeptide is Mediator of RNA polymerase II transcription subunit 12 (srb8) (Aspergillus terreus (strain NIH 2624 / FGSC A1156)).